The sequence spans 198 residues: Glycerol-3-phosphate acyltransferase (198 aa).

5 helical membrane-spanning segments follow: residues 5-25 (LILLSLLAYVIGSIPSGLWIG), 56-76 (SIVTVMDILKGTVATLLPFFF), 84-104 (FWLLTGAFAIIGHSFPLFAGF), 114-134 (AGVILAYAPLLFVAALVVFLV), and 158-178 (LFMGDWILIVLVACIALFVIW).

Belongs to the PlsY family. In terms of assembly, probably interacts with PlsX.

It is found in the cell membrane. It catalyses the reaction an acyl phosphate + sn-glycerol 3-phosphate = a 1-acyl-sn-glycero-3-phosphate + phosphate. The protein operates within lipid metabolism; phospholipid metabolism. Its function is as follows. Catalyzes the transfer of an acyl group from acyl-phosphate (acyl-PO(4)) to glycerol-3-phosphate (G3P) to form lysophosphatidic acid (LPA). This enzyme utilizes acyl-phosphate as fatty acyl donor, but not acyl-CoA or acyl-ACP. This chain is Glycerol-3-phosphate acyltransferase, found in Listeria monocytogenes serovar 1/2a (strain ATCC BAA-679 / EGD-e).